The following is a 102-amino-acid chain: MNGIPMEHGLLLAAILFCIGLCGLLIRRNLLFILMSIEIMMNASALAFVVAGSRWAQADGQIMYILVISLAAAEASIGLALLLLLYRRYHTLNVDTVSEMRG.

3 helical membrane passes run 6 to 26 (MEHGLLLAAILFCIGLCGLLI), 30 to 50 (LLFILMSIEIMMNASALAFVV), and 65 to 85 (ILVISLAAAEASIGLALLLLL).

Belongs to the complex I subunit 4L family. As to quaternary structure, NDH-1 is composed of 14 different subunits. Subunits NuoA, H, J, K, L, M, N constitute the membrane sector of the complex.

It localises to the cell inner membrane. The catalysed reaction is a quinone + NADH + 5 H(+)(in) = a quinol + NAD(+) + 4 H(+)(out). Its function is as follows. NDH-1 shuttles electrons from NADH, via FMN and iron-sulfur (Fe-S) centers, to quinones in the respiratory chain. The immediate electron acceptor for the enzyme in this species is believed to be ubiquinone. Couples the redox reaction to proton translocation (for every two electrons transferred, four hydrogen ions are translocated across the cytoplasmic membrane), and thus conserves the redox energy in a proton gradient. The protein is NADH-quinone oxidoreductase subunit K of Aeromonas salmonicida (strain A449).